Consider the following 92-residue polypeptide: Small ribosomal subunit protein uS19c (92 aa).

The protein belongs to the universal ribosomal protein uS19 family.

The protein resides in the plastid. It is found in the chloroplast. Its function is as follows. Protein S19 forms a complex with S13 that binds strongly to the 16S ribosomal RNA. The polypeptide is Small ribosomal subunit protein uS19c (rps19) (Marchantia polymorpha (Common liverwort)).